A 52-amino-acid chain; its full sequence is Conotoxin Ac4.3a (52 aa).

Residues 1–11 constitute a propeptide that is removed on maturation; sequence SDFRNAAVHER. Glutamine 12 carries the pyrrolidone carboxylic acid modification. Glutamate 14 carries the 4-carboxyglutamate modification. O-linked (HexNAc...) threonine glycans are attached at residues threonine 18 and threonine 20. 4-hydroxyproline occurs at positions 28, 33, and 47. Proline 47 is subject to Proline amide. The propeptide occupies 48-52; it reads GRRND.

It belongs to the conotoxin A superfamily. In terms of processing, contains 3 disulfide bonds. As to expression, expressed by the venom duct.

It localises to the secreted. Functionally, probable neurotoxin with ion channel inhibitor activity. In Conus achatinus (Little frog cone), this protein is Conotoxin Ac4.3a.